The chain runs to 196 residues: dCTP deaminase, dUMP-forming (196 aa).

DCTP-binding positions include 101–106, aspartate 119, 127–129, glutamine 148, tyrosine 162, and glutamine 174; these read KSSLGR and TLE. Glutamate 129 (proton donor/acceptor) is an active-site residue.

The protein belongs to the dCTP deaminase family. In terms of assembly, homotrimer.

The enzyme catalyses dCTP + 2 H2O = dUMP + NH4(+) + diphosphate. It functions in the pathway pyrimidine metabolism; dUMP biosynthesis; dUMP from dCTP: step 1/1. Bifunctional enzyme that catalyzes both the deamination of dCTP to dUTP and the hydrolysis of dUTP to dUMP without releasing the toxic dUTP intermediate. This chain is dCTP deaminase, dUMP-forming, found in Tropheryma whipplei (strain TW08/27) (Whipple's bacillus).